We begin with the raw amino-acid sequence, 656 residues long: Anion exchange transporter (656 aa).

At methionine 1 to histidine 75 the chain is on the cytoplasmic side. The chain crosses the membrane as a helical span at residues proline 76 to glycine 96. Residues histidine 97–arginine 144 are Extracellular-facing. Residues isoleucine 145–leucine 165 traverse the membrane as a helical segment. Position 166 (glutamine 166) is a topological domain, cytoplasmic. A helical membrane pass occupies residues leucine 167–alanine 187. Over threonine 188 to lysine 202 the chain is Extracellular. Residues methionine 203–isoleucine 223 traverse the membrane as a helical segment. The Cytoplasmic segment spans residues lysine 224–arginine 227. Residues leucine 228 to asparagine 248 traverse the membrane as a helical segment. The Extracellular segment spans residues glutamate 249–lysine 254. A helical transmembrane segment spans residues isoleucine 255 to cysteine 275. The Cytoplasmic segment spans residues threonine 276–serine 306. Residues alanine 307–alanine 327 form a helical membrane-spanning segment. The Extracellular portion of the chain corresponds to glutamine 328–glutamate 343. The helical transmembrane segment at phenylalanine 344–alanine 364 threads the bilayer. Over alanine 365–cysteine 383 the chain is Cytoplasmic. The next 2 membrane-spanning stretches (helical) occupy residues leucine 384–leucine 404 and proline 405–arginine 425. Topologically, residues aspartate 426 to threonine 448 are extracellular. A helical transmembrane segment spans residues isoleucine 449–isoleucine 469. The Cytoplasmic portion of the chain corresponds to glycine 470–valine 656. One can recognise an STAS domain in the interval threonine 492 to isoleucine 641. A membrane targeting region spans residues isoleucine 641–valine 656.

This sequence belongs to the SLC26A/SulP transporter (TC 2.A.53) family. Expressed in the thyroid gland (at protein level). Expressed in tonsillar high endothelial venule endothelial cells (HEVEC), placenta and in testis, expressed in a subgroup of basal cells in the epididymal ducts.

The protein resides in the basolateral cell membrane. The protein localises to the recycling endosome membrane. Its subcellular location is the apical cell membrane. It localises to the lateral cell membrane. It catalyses the reaction chloride(in) = chloride(out). The catalysed reaction is iodide(out) = iodide(in). The enzyme catalyses bromide(in) = bromide(out). It carries out the reaction oxalate(in) = oxalate(out). It catalyses the reaction nitrate(in) = nitrate(out). The catalysed reaction is sulfate(in) = sulfate(out). The enzyme catalyses thiocyanate(in) = thiocyanate(out). It carries out the reaction D-gluconate(in) = D-gluconate(out). It catalyses the reaction hydrogencarbonate(in) = hydrogencarbonate(out). The catalysed reaction is hydrogencarbonate(in) + chloride(out) = hydrogencarbonate(out) + chloride(in). Is active at both alkaline and acidic pH. Activity is inhibited by 4,4'-Di-isothiocyanatostilbene-2,2'-disulfonic acid (DIDS - an inhibitor of several anion channels and transporters). Functionally, acts as an anion channel mediating the transport of chloride, sulfate and oxalate ions. Mediates the transport of bromide, iodide, nitrate, gluconate, thiocyanate and bicarbonate ions. Its permeability towards bicarbonate is weak and increases when pH is above 7. Mediates thiocyanate transport in retinal pigment epithelium cells. Mediates iodide transport in the thyroid gland, playing an important role in the synthesis of thyroid hormones and the maintenance of thyroid function. Although it is an anion channel, according to PubMed:12736153 and PubMed:32119864 it has been shown to exhibit chloride-bicarbonate exchanger activity. In Homo sapiens (Human), this protein is Anion exchange transporter.